We begin with the raw amino-acid sequence, 493 residues long: 3-octaprenyl-4-hydroxybenzoate carboxy-lyase (493 aa).

Residue N172 coordinates Mn(2+). Prenylated FMN is bound by residues 175-177 (IYR), 189-191 (RWL), and 194-195 (RG). E238 contacts Mn(2+). D287 (proton donor) is an active-site residue.

The protein belongs to the UbiD family. Homohexamer. Requires prenylated FMN as cofactor. The cofactor is Mn(2+).

It is found in the cell membrane. It carries out the reaction a 4-hydroxy-3-(all-trans-polyprenyl)benzoate + H(+) = a 2-(all-trans-polyprenyl)phenol + CO2. Its pathway is cofactor biosynthesis; ubiquinone biosynthesis. Catalyzes the decarboxylation of 3-octaprenyl-4-hydroxy benzoate to 2-octaprenylphenol, an intermediate step in ubiquinone biosynthesis. In Shewanella piezotolerans (strain WP3 / JCM 13877), this protein is 3-octaprenyl-4-hydroxybenzoate carboxy-lyase.